A 1919-amino-acid polypeptide reads, in one-letter code: Disks large homolog 5 (1919 aa).

The interval 98–142 (AEGAGSTYSVLSTMPSDSESSSSLSSVGTTGKAPSPPPLLTDQQV) is disordered. The segment covering 109-123 (STMPSDSESSSSLSS) has biased composition (low complexity). 2 positions are modified to phosphoserine: Ser-264 and Ser-295. A coiled-coil region spans residues 383 to 599 (LNKATAQNKD…LEKEARFRQL (217 aa)). PDZ domains lie at 620–710 (VVEF…RRRK) and 705–796 (VVRR…LKVF). Phosphoserine is present on Ser-900. 5 disordered regions span residues 927 to 1122 (GVGE…FRPK), 1150 to 1187 (QEWAPYSPGHSSRHSNPPLYPSRPSVGTVPRSLTPSTT), 1201 to 1230 (SHRVGPCSSPPAARDAGPQGLHPSVQHQGR), 1245 to 1264 (EMRATHGSNSLPSSARLGSS), and 1271 to 1306 (AERIKIPSTPRYPRSVVGSERGSVSHSECSTPPQSP). Position 984 is a phosphothreonine (Thr-984). Ser-1000 bears the Phosphoserine mark. A Phosphothreonine modification is found at Thr-1011. A compositionally biased stretch (basic and acidic residues) spans 1017–1030 (RRSDSIKFQHRLET). Position 1021 is a phosphoserine (Ser-1021). A compositionally biased stretch (pro residues) spans 1045 to 1055 (TSPPSALPPDV). Phosphothreonine is present on Thr-1183. 2 positions are modified to phosphoserine: Ser-1209 and Ser-1263. Composition is skewed to low complexity over residues 1252 to 1264 (SNSLPSSARLGSS) and 1284 to 1298 (RSVVGSERGSVSHSE). Ser-1334 is modified (phosphoserine). The 80-residue stretch at 1350–1429 (HVKVQKGSEP…TITILAQYNP (80 aa)) folds into the PDZ 3 domain. The segment at 1434–1493 (LSSHSRSSSHLDPAGTHSTLQGSGTTTPEHPSVIDPLMEQDEGPSTPPAKQSSSRIAGDA) is disordered. Over residues 1449-1462 (THSTLQGSGTTTPE) the composition is skewed to polar residues. One can recognise a PDZ 4 domain in the interval 1501–1582 (RVVFIKKSQL…GVRLKVQYRP (82 aa)). Residues 1593 to 1661 (GDSFYIRALY…PSKYVMDQEF (69 aa)) enclose the SH3 domain. Ser-1666 is modified (phosphoserine). The Guanylate kinase-like domain occupies 1722–1905 (DSVSLAYQRV…ICTQILAMVN (184 aa)).

This sequence belongs to the MAGUK family. In terms of assembly, interacts with MPP1. Interacts with CTNNB1 and with the third SH3 domain of SORBS3 to form a ternary complex. Interacts (via coiled-coil domain) with MARK3. Interacts (via PDZ domain 3) with STK3/MST2 and STK4/MST1. Interacts with SCRIB. Interacts with CTNB1, SMO and (via PDZ4 or guanylate kinase-like domain) with KIF7. Highly expressed in normal breast tissues and low-grade breast cancer tissues (at protein level). Highly expressed in the placenta and prostate. Expressed at a lower level in the thyroid, spinal cord, trachea, adrenal gland, skeletal muscle, pancreas, heart, brain, liver and kidney. A short splice product shows more limited expression, being absent from at least the brain.

Its subcellular location is the cell junction. It is found in the cell membrane. The protein localises to the postsynaptic density. The protein resides in the cytoplasm. It localises to the cytoskeleton. Its subcellular location is the cilium basal body. Functionally, acts as a regulator of the Hippo signaling pathway. Negatively regulates the Hippo signaling pathway by mediating the interaction of MARK3 with STK3/4, bringing them together to promote MARK3-dependent hyperphosphorylation and inactivation of STK3 kinase activity toward LATS1. Positively regulates the Hippo signaling pathway by mediating the interaction of SCRIB with STK4/MST1 and LATS1 which is important for the activation of the Hippo signaling pathway. Involved in regulating cell proliferation, maintenance of epithelial polarity, epithelial-mesenchymal transition (EMT), cell migration and invasion. Plays an important role in dendritic spine formation and synaptogenesis in cortical neurons; regulates synaptogenesis by enhancing the cell surface localization of N-cadherin. Acts as a positive regulator of hedgehog (Hh) signaling pathway. Plays a critical role in the early point of the SMO activity cycle by interacting with SMO at the ciliary base to induce the accumulation of KIF7 and GLI2 at the ciliary tip for GLI2 activation. In Homo sapiens (Human), this protein is Disks large homolog 5 (DLG5).